The following is a 529-amino-acid chain: Bifunctional purine biosynthesis protein PurH (529 aa).

The MGS-like domain occupies 1–148 (MQQRRPVRRA…KNHKDVAIVV (148 aa)). At K287 the chain carries N6-acetyllysine.

Belongs to the PurH family.

The enzyme catalyses (6R)-10-formyltetrahydrofolate + 5-amino-1-(5-phospho-beta-D-ribosyl)imidazole-4-carboxamide = 5-formamido-1-(5-phospho-D-ribosyl)imidazole-4-carboxamide + (6S)-5,6,7,8-tetrahydrofolate. The catalysed reaction is IMP + H2O = 5-formamido-1-(5-phospho-D-ribosyl)imidazole-4-carboxamide. Its pathway is purine metabolism; IMP biosynthesis via de novo pathway; 5-formamido-1-(5-phospho-D-ribosyl)imidazole-4-carboxamide from 5-amino-1-(5-phospho-D-ribosyl)imidazole-4-carboxamide (10-formyl THF route): step 1/1. It participates in purine metabolism; IMP biosynthesis via de novo pathway; IMP from 5-formamido-1-(5-phospho-D-ribosyl)imidazole-4-carboxamide: step 1/1. In Escherichia coli O6:H1 (strain CFT073 / ATCC 700928 / UPEC), this protein is Bifunctional purine biosynthesis protein PurH.